A 65-amino-acid polypeptide reads, in one-letter code: RLCLSDYSIFSETIEICPEGHNYCFKKFPKGITRLPWVIRGCAATCPKPEAQVYVDCCARDKCNR.

4 disulfide bridges follow: cysteine 3/cysteine 24, cysteine 17/cysteine 42, cysteine 46/cysteine 57, and cysteine 58/cysteine 63.

Expressed by the venom gland.

The protein localises to the secreted. Its function is as follows. Has anticoagulant activity, since it is able to inhibit the activation of coagulation factor X (F10) by coagulation factor VIIa (F7) (IC(50)=123.8 nM). Also shows weak irreversible neurotoxicity. In Hemachatus haemachatus (Rinkhals), this protein is Ringhalexin.